A 1011-amino-acid chain; its full sequence is PE-PGRS family protein PE_PGRS30 (1011 aa).

Positions 1–93 constitute a PE domain; it reads MSFLLVEPDL…AAAYTGAEAA (93 aa). The segment at 130–696 is PGRS domain; sequence SNAGGNGGPG…GGTGGTGGVL (567 aa). Residues 595-696 show a composition bias toward gly residues; that stretch reads GGAGGTGGDH…GGTGGTGGVL (102 aa). The tract at residues 595–701 is disordered; it reads GGAGGTGGDH…TGGVLFGQSG (107 aa). The segment at 697–1011 is C-terminal domain; that stretch reads FGQSGSSGPP…PTQLAQAIAP (315 aa).

This sequence belongs to the mycobacterial PE family. PGRS subfamily.

It is found in the secreted. Its subcellular location is the cell wall. The protein resides in the cell surface. Functionally, mediates suppression of pro-inflammatory immune response in macrophages via modulation of host cytokine response. Required for full virulence. Involved in inhibition of phago-lysosome fusion. In Mycobacterium tuberculosis (strain ATCC 25618 / H37Rv), this protein is PE-PGRS family protein PE_PGRS30.